Consider the following 242-residue polypeptide: Cysteine desulfuration protein SufE (242 aa).

C148 (cysteine persulfide intermediate) is an active-site residue.

It belongs to the SufE family. Monomer. Interacts with SufS; interaction enhances cysteine desulfurase activity of SufS.

It is found in the plastid. Its subcellular location is the apicoplast. It participates in cofactor biosynthesis; iron-sulfur cluster biosynthesis. Its function is as follows. Participates in sulfur mobilization (SUF) pathway for iron-sulfur (Fe-S) cluster biogenesis. Enhances cysteine desulfurase activity of SufS. Probably functions as a sulfur acceptor for SufS. This chain is Cysteine desulfuration protein SufE, found in Plasmodium vivax.